A 257-amino-acid chain; its full sequence is General L-amino acid transport ATP-binding protein AapP (257 aa).

Positions 18–252 constitute an ABC transporter domain; that stretch reads VEIVNMNKWY…PQHERTKLFL (235 aa). 50–57 contacts ATP; sequence GPSGSGKS.

This sequence belongs to the ABC transporter superfamily.

Functionally, part of a binding-protein-dependent transport system for L-amino acids, affects the uptake as well as the efflux of these amino acids. Probably responsible for energy coupling to the transport system. The chain is General L-amino acid transport ATP-binding protein AapP (aapP) from Rhizobium johnstonii (strain DSM 114642 / LMG 32736 / 3841) (Rhizobium leguminosarum bv. viciae).